The sequence spans 330 residues: Deoxyhypusine hydroxylase (330 aa).

HEAT-like PBS-type repeat units follow at residues 57–83, 90–116, and 199–225; these read LKHE…VLRN, VRHE…YLSD, and ERYR…GFSG. Residues H59, E60, H92, and E93 each coordinate Fe cation. Fe cation is bound by residues H232, E233, H265, and E266. One copy of the HEAT-like PBS-type 4 repeat lies at 263 to 289; the sequence is VRHEAAEALGGIATPEVLPPLKEWVAR.

It belongs to the deoxyhypusine hydroxylase family. It depends on Fe(2+) as a cofactor.

It localises to the cytoplasm. Its subcellular location is the nucleus. It catalyses the reaction [eIF5A protein]-deoxyhypusine + AH2 + O2 = [eIF5A protein]-hypusine + A + H2O. Its pathway is protein modification; eIF5A hypusination. Functionally, catalyzes the hydroxylation of the N(6)-(4-aminobutyl)-L-lysine intermediate to form hypusine, an essential post-translational modification only found in mature eIF-5A factor. This chain is Deoxyhypusine hydroxylase, found in Lentinula edodes (Shiitake mushroom).